The sequence spans 885 residues: Cytosolic carboxypeptidase-like protein 5 (885 aa).

The Peptidase M14 domain maps to 150–576 (YPFSYAECQD…AVAVAALDMA (427 aa)). Residues histidine 247 and glutamate 250 each coordinate Zn(2+). 2 disordered regions span residues 341–364 (SGSALKTSNQSNTSPPVATPTERE) and 392–428 (ESWEKSGVQREAEHSDENESAQSRGETNSAPSEQVPP). Residues 344 to 356 (ALKTSNQSNTSPP) show a composition bias toward polar residues. Positions 393-408 (SWEKSGVQREAEHSDE) are enriched in basic and acidic residues. Positions 411-428 (SAQSRGETNSAPSEQVPP) are enriched in polar residues. Position 440 (histidine 440) interacts with Zn(2+). The Proton donor/acceptor role is filled by glutamate 522. Positions 606 to 668 (STGLTSNNRR…KSSPSFTFGT (63 aa)) are enriched in polar residues. Disordered regions lie at residues 606 to 788 (STGL…RTAL) and 866 to 885 (ALLKNSSRQTDQHIHRSLPT). Over residues 682 to 691 (RECKAQEKRR) the composition is skewed to basic and acidic residues. A compositionally biased stretch (low complexity) spans 712–749 (LSAPVRAPLSPSSSSSSSSSSPSSSSSAPGPGSISLAG).

It belongs to the peptidase M14 family. Zn(2+) serves as cofactor.

Its subcellular location is the cytoplasm. It is found in the cytosol. The protein resides in the nucleus. It localises to the cytoskeleton. The protein localises to the spindle. Its subcellular location is the midbody. The enzyme catalyses gamma-L-glutamyl-L-glutamyl-[protein] + H2O = L-glutamyl-[protein] + L-glutamate. It catalyses the reaction (L-glutamyl)(n+1)-gamma-L-glutamyl-L-glutamyl-[protein] + H2O = (L-glutamyl)(n)-gamma-L-glutamyl-L-glutamyl-[protein] + L-glutamate. It carries out the reaction C-terminal L-alpha-aminoacyl-L-glutamyl-[tubulin] + H2O = C-terminal L-alpha-aminoacyl-[tubulin] + L-glutamate. The catalysed reaction is C-terminal L-alpha-aminoacyl-L-glutamyl-L-glutamyl-[tubulin] + H2O = C-terminal L-alpha-aminoacyl-L-glutamyl-[tubulin] + L-glutamate. Metallocarboxypeptidase that mediates deglutamylation of tubulin and non-tubulin target proteins. Catalyzes the removal of polyglutamate side chains present on the gamma-carboxyl group of glutamate residues within the C-terminal tail of alpha- and beta-tubulin. Cleaves alpha- and gamma-linked polyglutamate tubulin side-chain, as well as the branching point glutamate. Also catalyzes the removal of alpha-linked glutamate residues from the carboxy-terminus of alpha-tubulin. In Danio rerio (Zebrafish), this protein is Cytosolic carboxypeptidase-like protein 5 (agbl5).